Reading from the N-terminus, the 107-residue chain is Integration host factor subunit alpha (107 aa).

The protein belongs to the bacterial histone-like protein family. In terms of assembly, heterodimer of an alpha and a beta chain.

Its function is as follows. This protein is one of the two subunits of integration host factor, a specific DNA-binding protein that functions in genetic recombination as well as in transcriptional and translational control. The sequence is that of Integration host factor subunit alpha from Bartonella tribocorum (strain CIP 105476 / IBS 506).